The chain runs to 244 residues: Sperm-egg fusion protein Juno (244 aa).

Positions 1-19 (MAQWWLILLGLWTVLPSLA) are cleaved as a signal peptide. Intrachain disulfides connect Cys27–Cys55, Cys47–Cys95, Cys56–Cys99, Cys79–Cys166, Cys86–Cys137, Cys126–Cys200, Cys130–Cys180, and Cys143–Cys160. Residues 62–81 (WEAHLDEPLLFNFSMTHCGL) form an important for interaction with IZUMO1 region. N-linked (GlcNAc...) asparagine glycosylation occurs at Asn73. A propeptide spanning residues 223–244 (SASAPQLSYSITAFSLCLLLHA) is cleaved from the precursor.

The protein belongs to the folate receptor family. As to quaternary structure, monomer. Interacts with IZUMO1; the interaction is direct. IZUMO1 and IZUMO1R/JUNO form a complex with 1:1 stoichiometry. Interacts with FCRL3/MAIA; FCRL3/MAIA replaces IZUMO1R/JUNO as IZUMO1 receptor after sperm-egg adhesion, thereby permitting species-specific gamete fusion. Interacts with WDR54. The protein is rapidly cleaved following fertilization, being only weakly detectable in zona-intact fertilized eggs at telophase II and undetectable at the pronuclear stage. Sheding is probably required to block to polyspermy and ensuring egg fusion with a single sperm. Expressed in the oocyte (at protein level).

The protein resides in the cell membrane. Its subcellular location is the cell projection. It is found in the microvillus membrane. Its function is as follows. Receptor for IZUMO1 present at the cell surface of oocytes (oolemma), which is essential for species-specific gamete recognition and fertilization. The IZUMO1:IZUMO1R/JUNO interaction is a necessary adhesion event between sperm and egg that is required for fertilization but is not sufficient for cell fusion. The ligand-receptor interaction probably does not act as a membrane 'fusogen'. Does not bind folate. This is Sperm-egg fusion protein Juno (Izumo1r) from Rattus norvegicus (Rat).